We begin with the raw amino-acid sequence, 510 residues long: Calmodulin-binding receptor-like cytoplasmic kinase 3 (510 aa).

Positions 1–30 (MGGDDLSFTRLVITALFGLLMLLQIKETSA) are cleaved as a signal peptide. The segment covering 166-178 (VSSFEMSPSSEKI) has biased composition (polar residues). Residues 166–209 (VSSFEMSPSSEKIPQSPFRAPPSPSRVPQSPSRYAMSPRPSRLG) form a disordered region. T214 carries the phosphothreonine modification. The Protein kinase domain maps to 225 to 499 (FADSHQIGEG…MEAVGKQLWA (275 aa)). Residues 231-239 (IGEGGFGVV) and K253 contribute to the ATP site. The segment at 240–265 (FKGVLDDGQVVAIKRAKKEHFENLRT) is caM-binding. Residue D350 is the Proton acceptor of the active site. Position 354 is a phosphoserine (S354). Residues T386 and T391 each carry the phosphothreonine modification. Y399 carries the phosphotyrosine modification.

It belongs to the protein kinase superfamily. Ser/Thr protein kinase family. Interacts with calmodulin (CaM) in a Ca(2+)-dependent manner.

Its subcellular location is the cytoplasm. The enzyme catalyses L-seryl-[protein] + ATP = O-phospho-L-seryl-[protein] + ADP + H(+). The catalysed reaction is L-threonyl-[protein] + ATP = O-phospho-L-threonyl-[protein] + ADP + H(+). This chain is Calmodulin-binding receptor-like cytoplasmic kinase 3 (CRCK3), found in Arabidopsis thaliana (Mouse-ear cress).